A 727-amino-acid chain; its full sequence is Protein TITANIA (727 aa).

Residues 1–136 (MFGDSDGSKD…LASLLQPVPA (136 aa)) are disordered. The span at 14 to 25 (GAPPSTTDPPFP) shows a compositional bias: pro residues. Residues 67-88 (DDGKHCVERDFLHLSAPKRGDP) are compositionally biased toward basic and acidic residues. A compositionally biased stretch (low complexity) spans 104-117 (DSLQLSLSLNSDGP). A PHD-type zinc finger spans residues 406–470 (ACTCSVCHKF…QFQCLACNHS (65 aa)). Positions 629–697 (VKCKEAEAKL…LEELKMLENS (69 aa)) form a coiled coil.

As to expression, widely expressed.

Its subcellular location is the nucleus. In terms of biological role, probable transcription factor that functions as a regulator of metal transporter genes responsible for essential metals delivery to shoots and normal plant growth. Required for the maintenance of metal transporter gene expression, such as IRT1, IRT2, ZIP1, ZIP9, NRAMP1 and NRAMP5. This chain is Protein TITANIA, found in Oryza sativa subsp. japonica (Rice).